Here is a 172-residue protein sequence, read N- to C-terminus: Male-specific submandibular salivary gland protein (172 aa).

The N-terminal stretch at 1–15 (MVKFLLLALALGVSC) is a signal peptide. A glycan (N-linked (GlcNAc...) asparagine) is linked at N41. Cystine bridges form between C60-C64 and C79-C170.

It belongs to the calycin superfamily. Lipocalin family. Post-translationally, N-glycosylated. In terms of tissue distribution, expressed in acinar cells of the submandibular salivary gland from where it is secreted into saliva (at protein level). Also released from the submandibular salivary gland into blood and excreted in urine (at protein level). Expressed in the lacrimal gland from where it is secreted into tears (at protein level).

The protein resides in the secreted. Its subcellular location is the cytoplasm. In Mesocricetus auratus (Golden hamster), this protein is Male-specific submandibular salivary gland protein.